The following is a 240-amino-acid chain: Endo-chitosanase B (240 aa).

A signal peptide spans 1–17; the sequence is MRLSEILAVALVTGATA. Asn-86 carries N-linked (GlcNAc...) asparagine glycosylation.

This sequence belongs to the glycosyl hydrolase 75 family.

The protein resides in the secreted. The catalysed reaction is Endohydrolysis of beta-(1-&gt;4)-linkages between D-glucosamine residues in a partly acetylated chitosan.. Chitosanase catalyzing the endo-type cleavage of chitosan, the deacylated form of chitin. Chitosanase may be crucial in the degradation of the deacetylated portion of chitin in the fungal cell wall. Chitoolisaccharides produced by the hydrolysis of partially N-acetylated chitosan are known to have many biological activities, including antibacterial activity, immune-enhancing effects, and elicitor activity. In Aspergillus oryzae (Yellow koji mold), this protein is Endo-chitosanase B (csnB).